The primary structure comprises 204 residues: Holliday junction branch migration complex subunit RuvA (204 aa).

Positions 1-64 (MIGKLKGTID…EDQLKLFGFM (64 aa)) are domain I. The interval 65 to 143 (TALEREWFNL…AYAGEAINIA (79 aa)) is domain II. Residues 144 to 151 (LKRELGEG) are flexible linker. Positions 152-204 (VAAAPVADAVSALTNLGYSRDQAANAVAAAMKTAGEGADSAKLIRLGLKELAR) are domain III.

Belongs to the RuvA family. In terms of assembly, homotetramer. Forms an RuvA(8)-RuvB(12)-Holliday junction (HJ) complex. HJ DNA is sandwiched between 2 RuvA tetramers; dsDNA enters through RuvA and exits via RuvB. An RuvB hexamer assembles on each DNA strand where it exits the tetramer. Each RuvB hexamer is contacted by two RuvA subunits (via domain III) on 2 adjacent RuvB subunits; this complex drives branch migration. In the full resolvosome a probable DNA-RuvA(4)-RuvB(12)-RuvC(2) complex forms which resolves the HJ.

The protein resides in the cytoplasm. In terms of biological role, the RuvA-RuvB-RuvC complex processes Holliday junction (HJ) DNA during genetic recombination and DNA repair, while the RuvA-RuvB complex plays an important role in the rescue of blocked DNA replication forks via replication fork reversal (RFR). RuvA specifically binds to HJ cruciform DNA, conferring on it an open structure. The RuvB hexamer acts as an ATP-dependent pump, pulling dsDNA into and through the RuvAB complex. HJ branch migration allows RuvC to scan DNA until it finds its consensus sequence, where it cleaves and resolves the cruciform DNA. This chain is Holliday junction branch migration complex subunit RuvA, found in Rhizobium etli (strain ATCC 51251 / DSM 11541 / JCM 21823 / NBRC 15573 / CFN 42).